We begin with the raw amino-acid sequence, 366 residues long: MSHNTFGHLFRVTTFGESHGVALGCVVDGCPPGLPLEAEEIQAELDRRKPGQSRFTTQRREPDQVKILSGVFADDRTGGRQLTTGTPIALMIENTDQRSKDYSEIRDSYRPGHADYTYDVKYGIRDYRGGGRSSARETAARVAAGAVARKVIPGVTIRAALVQMGPHAIDRSRWDWDAVGNNPFFCPDAERASFYETYLDGLRKDGSSVGAVIEVVAEGVPPGLGAPVYGKLDADLAAAMMSINAVKGVEIGDGFAAATLRGEDNADEMRAGNGGRPRFLANHAGGILGGISNGEPVVVRFAVKPTSSILTPRRSVTRDGAEVDLVTKGRHDPCVGIRAVPVAEAMMACVLADHYLRHRGQTAGGG.

Residues Arg-48 and Arg-54 each coordinate NADP(+). Residues 132–134, 244–245, Gly-289, 304–308, and Arg-330 contribute to the FMN site; these read RSS, NA, and KPTSS.

The protein belongs to the chorismate synthase family. As to quaternary structure, homotetramer. It depends on FMNH2 as a cofactor.

It catalyses the reaction 5-O-(1-carboxyvinyl)-3-phosphoshikimate = chorismate + phosphate. Its pathway is metabolic intermediate biosynthesis; chorismate biosynthesis; chorismate from D-erythrose 4-phosphate and phosphoenolpyruvate: step 7/7. Its function is as follows. Catalyzes the anti-1,4-elimination of the C-3 phosphate and the C-6 proR hydrogen from 5-enolpyruvylshikimate-3-phosphate (EPSP) to yield chorismate, which is the branch point compound that serves as the starting substrate for the three terminal pathways of aromatic amino acid biosynthesis. This reaction introduces a second double bond into the aromatic ring system. The protein is Chorismate synthase of Methylobacterium radiotolerans (strain ATCC 27329 / DSM 1819 / JCM 2831 / NBRC 15690 / NCIMB 10815 / 0-1).